A 553-amino-acid chain; its full sequence is Dihydroxy-acid dehydratase (553 aa).

Mg(2+) is bound at residue aspartate 78. Cysteine 119 is a binding site for [2Fe-2S] cluster. The Mg(2+) site is built by aspartate 120 and lysine 121. At lysine 121 the chain carries N6-carboxylysine. Residue cysteine 193 participates in [2Fe-2S] cluster binding. Glutamate 441 provides a ligand contact to Mg(2+). The Proton acceptor role is filled by serine 467.

The protein belongs to the IlvD/Edd family. Homodimer. Requires [2Fe-2S] cluster as cofactor. Mg(2+) is required as a cofactor.

The catalysed reaction is (2R)-2,3-dihydroxy-3-methylbutanoate = 3-methyl-2-oxobutanoate + H2O. It catalyses the reaction (2R,3R)-2,3-dihydroxy-3-methylpentanoate = (S)-3-methyl-2-oxopentanoate + H2O. The protein operates within amino-acid biosynthesis; L-isoleucine biosynthesis; L-isoleucine from 2-oxobutanoate: step 3/4. Its pathway is amino-acid biosynthesis; L-valine biosynthesis; L-valine from pyruvate: step 3/4. Functions in the biosynthesis of branched-chain amino acids. Catalyzes the dehydration of (2R,3R)-2,3-dihydroxy-3-methylpentanoate (2,3-dihydroxy-3-methylvalerate) into 2-oxo-3-methylpentanoate (2-oxo-3-methylvalerate) and of (2R)-2,3-dihydroxy-3-methylbutanoate (2,3-dihydroxyisovalerate) into 2-oxo-3-methylbutanoate (2-oxoisovalerate), the penultimate precursor to L-isoleucine and L-valine, respectively. This is Dihydroxy-acid dehydratase from Geobacter sulfurreducens (strain ATCC 51573 / DSM 12127 / PCA).